The chain runs to 215 residues: MLQVYLVRHGETLWNAARRIQGQSDSALTEKGEQQAYQVGQRVRDLGITHVIASDLGRTRRTAEIIADACGCSVVLDPRLRELNMGVLEQRKLDSLSAEEESWRKALVDGTENGRIPQGESMSEMAQRMRQALDACLSLPENSRPLIVSHGMALGVLVSTILGLPANAERRLRLRNCSISRVDHQQSPWLASGWVVETAGDVSHLEDTALDELQR.

Substrate is bound by residues 8–15 (RHGETLWN), 21–22 (QG), arginine 58, arginine 60, 82–85 (ELNM), and 151–152 (GM). Histidine 9 acts as the Tele-phosphohistidine intermediate in catalysis. Glutamate 82 functions as the Proton donor/acceptor in the catalytic mechanism.

The protein belongs to the phosphoglycerate mutase family. GpmB subfamily.

It catalyses the reaction (2R)-2-phosphoglycerate = (2R)-3-phosphoglycerate. The protein operates within carbohydrate degradation; glycolysis; pyruvate from D-glyceraldehyde 3-phosphate: step 3/5. This chain is Probable phosphoglycerate mutase GpmB, found in Erwinia tasmaniensis (strain DSM 17950 / CFBP 7177 / CIP 109463 / NCPPB 4357 / Et1/99).